Consider the following 462-residue polypeptide: Bifunctional dihydrofolate reductase-thymidylate synthase (462 aa).

The DHFR domain maps to 6–165 (TFSMVLAMTL…INYDYQHLIN (160 aa)). V10 lines the substrate pocket. Residues A12 and 18-24 (GIGYQNR) contribute to the NADP(+) site. Position 32 (D32) interacts with substrate. NADP(+) contacts are provided by residues 49-51 (RKT) and 68-71 (ISKN). Residue I101 coordinates substrate. 102–109 (GGKRIFEE) contributes to the NADP(+) binding site. T122 is a binding site for substrate. Residues 180-462 (ENQYLDMITK…HDKIEMKMAV (283 aa)) are thymidylate synthase. R200 contributes to the dUMP binding site. The active site involves C345. Residues H346, 364 to 368 (QRSCD), N376, and 406 to 408 (HIY) each bind dUMP.

It in the N-terminal section; belongs to the dihydrofolate reductase family. The protein in the C-terminal section; belongs to the thymidylate synthase family.

It catalyses the reaction (6S)-5,6,7,8-tetrahydrofolate + NADP(+) = 7,8-dihydrofolate + NADPH + H(+). The enzyme catalyses dUMP + (6R)-5,10-methylene-5,6,7,8-tetrahydrofolate = 7,8-dihydrofolate + dTMP. It functions in the pathway cofactor biosynthesis; tetrahydrofolate biosynthesis; 5,6,7,8-tetrahydrofolate from 7,8-dihydrofolate: step 1/1. Its function is as follows. Bifunctional enzyme. Involved in de novo dTMP biosynthesis. Key enzyme in folate metabolism. Catalyzes an essential reaction for de novo glycine and purine synthesis, DNA precursor synthesis, and for the conversion of dUMP to dTMP. The polypeptide is Bifunctional dihydrofolate reductase-thymidylate synthase (Paramecium tetraurelia).